A 347-amino-acid polypeptide reads, in one-letter code: Olfactory receptor 13C3 (347 aa).

Residues 1 to 55 (MIVQLICTVCFLAVNTFHVRSSFDFLKADDMGEINQTLVSEFLLLGLSGYPKIEI) are Extracellular-facing. An N-linked (GlcNAc...) asparagine glycan is attached at Asn35. The chain crosses the membrane as a helical span at residues 56–76 (VYFALILVMYLVILIGNGVLI). The Cytoplasmic segment spans residues 77–84 (IASIFDSH). The chain crosses the membrane as a helical span at residues 85–105 (FHTPMYFFLGNLSFLDICYTS). The Extracellular portion of the chain corresponds to 106–129 (SSVPSTLVSLISKKRNISFSGCAV). Cysteines 127 and 219 form a disulfide. Residues 130–150 (QMFFGFAMGSTECLLLGMMAF) form a helical membrane-spanning segment. The Cytoplasmic portion of the chain corresponds to 151–169 (DRYVAICNPLRYPIILSKV). The chain crosses the membrane as a helical span at residues 170 to 190 (AYVLMASVSWLSGGINSAVQT). At 191–227 (LLAMRLPFCGNNIINHFACEILAVLKLACADISLNII) the chain is on the extracellular side. A helical membrane pass occupies residues 228–247 (TMVISNMAFLVLPLMVIFFS). Over 248 to 267 (YMFILYTILQMNSATGRRKA) the chain is Cytoplasmic. Residues 268–288 (FSTCSAHLTVVIIFYGTIFFM) traverse the membrane as a helical segment. Residues 289-307 (YAKPKSQDLIGEEKLQALD) lie on the Extracellular side of the membrane. Residues 308-328 (KLISLFYGVVTPMLNPILYSL) form a helical membrane-spanning segment. Topologically, residues 329–347 (RNKDVKAAVKYLLNKKPIH) are cytoplasmic.

Belongs to the G-protein coupled receptor 1 family.

It is found in the cell membrane. Its function is as follows. Odorant receptor. This Homo sapiens (Human) protein is Olfactory receptor 13C3 (OR13C3).